Here is a 474-residue protein sequence, read N- to C-terminus: Ribulose bisphosphate carboxylase/oxygenase activase, chloroplastic (474 aa).

Residues 1-58 constitute a chloroplast transit peptide; that stretch reads MAAAVSTVGAINRAPLSLNGSGSGAVSAPASTFLGKKVVTVSRFAQSNKKSNGSFKVL. Position 78 is a phosphothreonine; by CK2 (Thr-78). 165 to 172 contributes to the ATP binding site; sequence GGKGQGKS. Thr-283 is subject to Phosphothreonine.

Belongs to the RuBisCO activase family. In terms of processing, phosphorylated at Thr-78 by CK2.

Its subcellular location is the plastid. It localises to the chloroplast stroma. It is found in the chloroplast. The protein resides in the plastoglobule. Its function is as follows. Activation of RuBisCO (ribulose-1,5-bisphosphate carboxylase/oxygenase; EC 4.1.1.39) involves the ATP-dependent carboxylation of the epsilon-amino group of lysine leading to a carbamate structure. This chain is Ribulose bisphosphate carboxylase/oxygenase activase, chloroplastic (RCA), found in Arabidopsis thaliana (Mouse-ear cress).